A 111-amino-acid chain; its full sequence is Flagellar hook-basal body complex protein FliE (111 aa).

The protein belongs to the FliE family.

It is found in the bacterial flagellum basal body. The polypeptide is Flagellar hook-basal body complex protein FliE (Clostridium acetobutylicum (strain ATCC 824 / DSM 792 / JCM 1419 / IAM 19013 / LMG 5710 / NBRC 13948 / NRRL B-527 / VKM B-1787 / 2291 / W)).